The sequence spans 293 residues: Beta-lactamase (293 aa).

Positions 1 to 27 (MRFTATVLSRVATGLALGLSMATASLA) are cleaved as a signal peptide. Ser74 acts as the Acyl-ester intermediate in catalysis. 238–240 (KSG) contributes to the substrate binding site.

It belongs to the class-A beta-lactamase family.

Its subcellular location is the periplasm. It catalyses the reaction a beta-lactam + H2O = a substituted beta-amino acid. Hydrolyzes beta-lactams antibiotics. Rates of hydrolysis relative to benzylpenicillin =100: ampicillin = 27, carbenicillin = 25, cloxacillin = 0, cephaloridine = 4. The protein is Beta-lactamase of Rhodobacter capsulatus (Rhodopseudomonas capsulata).